A 682-amino-acid chain; its full sequence is Heat shock 70 kDa protein 9, mitochondrial (682 aa).

The N-terminal 46 residues, 1 to 46 (MASVALLRSFRRREVQMASVSAFKSVSANGKNSMFGKLGYLARPFC), are a transit peptide targeting the mitochondrion. A disordered region spans residues 640–682 (SKIGEHMSKGSGSSGSDGSSGEGTSGTEQTPEAEFEEASGSRK). The segment covering 651–663 (GSSGSDGSSGEGT) has biased composition (gly residues).

The protein belongs to the heat shock protein 70 (TC 1.A.33) family. DnaK subfamily. Interacts with HSCB.

It is found in the mitochondrion. The protein resides in the cytoplasm. The protein localises to the cytosol. In terms of biological role, chaperone involved in the maturation of iron-sulfur [Fe-S] cluster-containing proteins. Has a low intrinsic ATPase activity which is markedly stimulated by HSCB and ISU1. In cooperation with other chaperones, Hsp70s are key components that facilitate folding of de novo synthesized proteins, assist translocation of precursor proteins into organelles, and are responsible for degradation of damaged protein under stress conditions. The protein is Heat shock 70 kDa protein 9, mitochondrial of Arabidopsis thaliana (Mouse-ear cress).